Here is a 764-residue protein sequence, read N- to C-terminus: 5-methyltetrahydropteroyltriglutamate--homocysteine methyltransferase (764 aa).

5-methyltetrahydropteroyltri-L-glutamate is bound by residues arginine 17 to lysine 20 and lysine 117. Residues isoleucine 437–serine 439 and glutamate 490 each bind L-homocysteine. Residues isoleucine 437 to serine 439 and glutamate 490 contribute to the L-methionine site. 5-methyltetrahydropteroyltri-L-glutamate is bound by residues arginine 521 to cysteine 522 and tryptophan 567. Residue aspartate 605 coordinates L-homocysteine. Aspartate 605 is an L-methionine binding site. Position 611 (glutamate 611) interacts with 5-methyltetrahydropteroyltri-L-glutamate. Zn(2+)-binding residues include histidine 647, cysteine 649, and glutamate 671. The Proton donor role is filled by histidine 701. Cysteine 733 is a binding site for Zn(2+).

This sequence belongs to the vitamin-B12 independent methionine synthase family. Zn(2+) is required as a cofactor.

The catalysed reaction is 5-methyltetrahydropteroyltri-L-glutamate + L-homocysteine = tetrahydropteroyltri-L-glutamate + L-methionine. It participates in amino-acid biosynthesis; L-methionine biosynthesis via de novo pathway; L-methionine from L-homocysteine (MetE route): step 1/1. Its function is as follows. Catalyzes the transfer of a methyl group from 5-methyltetrahydrofolate to homocysteine resulting in methionine formation. The polypeptide is 5-methyltetrahydropteroyltriglutamate--homocysteine methyltransferase (Blochmanniella pennsylvanica (strain BPEN)).